The chain runs to 228 residues: Peroxiredoxin-like 2C (228 aa).

Positions 1–22 are disordered; sequence MAAPSEAPVTRQVSGHAAPAPV. Positions 13–22 are enriched in low complexity; it reads VSGHAAPAPV.

Belongs to the peroxiredoxin-like PRXL2 family. PRXL2C subfamily.

Functionally, may positively regulate ERK1/2 signaling and AKT1 activation leading to HIF1A up-regulation with an increased expression of glycolysis genes and enhanced glycolysis. The chain is Peroxiredoxin-like 2C (PRXL2C) from Bos taurus (Bovine).